Consider the following 339-residue polypeptide: Glucokinase (339 aa).

16-21 is an ATP binding site; that stretch reads GDIGGT.

This sequence belongs to the bacterial glucokinase family.

The protein resides in the cytoplasm. It carries out the reaction D-glucose + ATP = D-glucose 6-phosphate + ADP + H(+). The polypeptide is Glucokinase (Pseudomonas paraeruginosa (strain DSM 24068 / PA7) (Pseudomonas aeruginosa (strain PA7))).